A 354-amino-acid polypeptide reads, in one-letter code: Guanine nucleotide-binding protein G(o) subunit alpha (354 aa).

A lipid anchor (N-myristoyl glycine) is attached at Gly-2. Cys-3 is lipidated: S-palmitoyl cysteine. The G-alpha domain occupies 32 to 354 (KDVKLLLLGA…ANNLRGCGLY (323 aa)). Residues 35–48 (KLLLLGAGESGKST) are G1 motif. GTP-binding residues include Glu-43, Lys-46, Ser-47, Thr-48, Ser-152, Leu-176, Arg-177, Thr-178, and Arg-179. Ser-47 contributes to the Mg(2+) binding site. Residues 174–182 (DILRTRVKT) form a G2 motif region. Position 182 (Thr-182) interacts with Mg(2+). The interval 197 to 206 (FRLFDVGGQR) is G3 motif. The residue at position 205 (Gln-205) is a 5-glutamyl histamine. Residues 266-273 (ILFLNKKD) are G4 motif. 3 residues coordinate GTP: Asn-270, Asp-273, and Cys-325. The interval 324–329 (TCATDT) is G5 motif. Position 346 is a deamidated asparagine; in form Alpha-3 (Asn-346). Cys-351 is lipidated: S-palmitoyl cysteine.

It belongs to the G-alpha family. G(i/o/t/z) subfamily. As to quaternary structure, g proteins are composed of 3 units; alpha, beta and gamma. The alpha chain contains the guanine nucleotide binding site. Forms a complex with GNB1 and GNG3. Interacts with RGS14. Interacts with RGS16. Interacts with RGS19. Interacts (when palmitoylated) with ADGRG3. Deamidation of Asn-346 converts alpha-1 to alpha-3. In terms of processing, histaminylated at Gln-205 residues by TGM2.

It is found in the cell membrane. Its subcellular location is the membrane. The catalysed reaction is GTP + H2O = GDP + phosphate + H(+). The GTPase activity is promoted by GTPAse activators, such as RGS14, RGS16 and RGS19. Its function is as follows. Guanine nucleotide-binding proteins (G proteins) function as transducers downstream of G protein-coupled receptors (GPCRs) in numerous signaling cascades. The alpha chain contains the guanine nucleotide binding site and alternates between an active, GTP-bound state and an inactive, GDP-bound state. Signaling by an activated GPCR promotes GDP release and GTP binding. The alpha subunit has a low GTPase activity that converts bound GTP to GDP, thereby terminating the signal. Both GDP release and GTP hydrolysis are modulated by numerous regulatory proteins. Signaling is mediated via effector proteins, such as adenylate cyclase. Inhibits adenylate cyclase activity, leading to decreased intracellular cAMP levels. The sequence is that of Guanine nucleotide-binding protein G(o) subunit alpha (GNAO1) from Cricetulus longicaudatus (Long-tailed dwarf hamster).